The following is a 201-amino-acid chain: UPF0301 protein ROP_34500 (201 aa).

It belongs to the UPF0301 (AlgH) family.

This is UPF0301 protein ROP_34500 from Rhodococcus opacus (strain B4).